Reading from the N-terminus, the 97-residue chain is Co-chaperonin GroES (97 aa).

Belongs to the GroES chaperonin family. As to quaternary structure, heptamer of 7 subunits arranged in a ring. Interacts with the chaperonin GroEL.

The protein resides in the cytoplasm. Its function is as follows. Together with the chaperonin GroEL, plays an essential role in assisting protein folding. The GroEL-GroES system forms a nano-cage that allows encapsulation of the non-native substrate proteins and provides a physical environment optimized to promote and accelerate protein folding. GroES binds to the apical surface of the GroEL ring, thereby capping the opening of the GroEL channel. This is Co-chaperonin GroES from Pseudomonas entomophila (strain L48).